A 106-amino-acid chain; its full sequence is uncharacterized protein (106 aa).

The N-terminal stretch at 1–31 (MNNERLMLKGIFLGAAAGAALSLLHKPTRQA) is a signal peptide. A coiled-coil region spans residues 57 to 89 (VITKVDEAKKLARTLSKEVDFVNQQVKELKKTT).

This is an uncharacterized protein from Bacillus subtilis (strain 168).